Here is a 430-residue protein sequence, read N- to C-terminus: Enolase (430 aa).

Residue glutamine 164 coordinates (2R)-2-phosphoglycerate. Catalysis depends on glutamate 208, which acts as the Proton donor. Aspartate 245, glutamate 288, and aspartate 315 together coordinate Mg(2+). Residues lysine 340, arginine 369, serine 370, and lysine 391 each coordinate (2R)-2-phosphoglycerate. Lysine 340 functions as the Proton acceptor in the catalytic mechanism.

It belongs to the enolase family. Mg(2+) serves as cofactor.

It localises to the cytoplasm. The protein resides in the secreted. Its subcellular location is the cell surface. It carries out the reaction (2R)-2-phosphoglycerate = phosphoenolpyruvate + H2O. Its pathway is carbohydrate degradation; glycolysis; pyruvate from D-glyceraldehyde 3-phosphate: step 4/5. Its function is as follows. Catalyzes the reversible conversion of 2-phosphoglycerate (2-PG) into phosphoenolpyruvate (PEP). It is essential for the degradation of carbohydrates via glycolysis. In Thermococcus gammatolerans (strain DSM 15229 / JCM 11827 / EJ3), this protein is Enolase.